A 488-amino-acid polypeptide reads, in one-letter code: NADH-ubiquinone oxidoreductase chain 2 (488 aa).

A run of 14 helical transmembrane segments spans residues 4–24 (LFLAVFPEIFIINATFILLIH), 45–65 (WLGLLSVLITLLLLAAGAPLL), 84–104 (FCQILLLLSTAGTISMCFDFF), 111–131 (AFEFIVLILLSTCSMLFMISA), 134–154 (LIAMYLAIELQSLCFYVLAAS), 168–188 (YLILGAFSSGILLFGCSMIYG), 215–235 (IFMGILFIAVGFLFKITAVPF), 252–272 (AFLSIAPKISIFANILRVFIY), 282–302 (IFFFCSIASMILGALAAMAQT), 308–328 (LAYSSIGHVGYICIGFSCGTI), 334–354 (LLIGLFIYALTTINAFAIVLA), 375–395 (ILAITFSITMFSYAGIPPLAG), 400–420 (FYLFFAALGCGAYFLASVGVV), and 456–476 (LLLAMTSSFITLFFLYPSPLF).

The protein belongs to the complex I subunit 2 family.

The protein localises to the mitochondrion inner membrane. The enzyme catalyses a ubiquinone + NADH + 5 H(+)(in) = a ubiquinol + NAD(+) + 4 H(+)(out). In terms of biological role, core subunit of the mitochondrial membrane respiratory chain NADH dehydrogenase (Complex I) that is believed to belong to the minimal assembly required for catalysis. Complex I functions in the transfer of electrons from NADH to the respiratory chain. The immediate electron acceptor for the enzyme is believed to be ubiquinone. The protein is NADH-ubiquinone oxidoreductase chain 2 (ND2) of Oenothera berteroana (Bertero's evening primrose).